A 436-amino-acid polypeptide reads, in one-letter code: Acetyl-CoA decarbonylase/synthase complex subunit delta 2 (436 aa).

It belongs to the CdhD family. As to quaternary structure, heterodimer of delta and gamma chains. The ACDS complex is made up of alpha, epsilon, beta, gamma and delta chains with a probable stoichiometry of (alpha(2)epsilon(2))(4)-beta(8)-(gamma(1)delta(1))(8) (Potential).

The protein operates within one-carbon metabolism; methanogenesis from acetate. Part of a complex that catalyzes the reversible cleavage of acetyl-CoA, allowing growth on acetate as sole source of carbon and energy. Probably maintains the overall quaternary structure of the ACDS complex. The polypeptide is Acetyl-CoA decarbonylase/synthase complex subunit delta 2 (cdhD2) (Methanosarcina acetivorans (strain ATCC 35395 / DSM 2834 / JCM 12185 / C2A)).